Reading from the N-terminus, the 95-residue chain is Aspartyl/glutamyl-tRNA(Asn/Gln) amidotransferase subunit C (95 aa).

It belongs to the GatC family. In terms of assembly, heterotrimer of A, B and C subunits.

It catalyses the reaction L-glutamyl-tRNA(Gln) + L-glutamine + ATP + H2O = L-glutaminyl-tRNA(Gln) + L-glutamate + ADP + phosphate + H(+). The catalysed reaction is L-aspartyl-tRNA(Asn) + L-glutamine + ATP + H2O = L-asparaginyl-tRNA(Asn) + L-glutamate + ADP + phosphate + 2 H(+). Allows the formation of correctly charged Asn-tRNA(Asn) or Gln-tRNA(Gln) through the transamidation of misacylated Asp-tRNA(Asn) or Glu-tRNA(Gln) in organisms which lack either or both of asparaginyl-tRNA or glutaminyl-tRNA synthetases. The reaction takes place in the presence of glutamine and ATP through an activated phospho-Asp-tRNA(Asn) or phospho-Glu-tRNA(Gln). This Pseudomonas paraeruginosa (strain DSM 24068 / PA7) (Pseudomonas aeruginosa (strain PA7)) protein is Aspartyl/glutamyl-tRNA(Asn/Gln) amidotransferase subunit C.